The sequence spans 416 residues: UDP-N-acetylglucosamine 1-carboxyvinyltransferase (416 aa).

22-23 (KN) contacts phosphoenolpyruvate. Arg92 is a UDP-N-acetyl-alpha-D-glucosamine binding site. The active-site Proton donor is Cys116. Position 116 is a 2-(S-cysteinyl)pyruvic acid O-phosphothioketal (Cys116). UDP-N-acetyl-alpha-D-glucosamine contacts are provided by residues 121–125 (RPVDQ), Asp304, and Ile326.

The protein belongs to the EPSP synthase family. MurA subfamily.

Its subcellular location is the cytoplasm. The catalysed reaction is phosphoenolpyruvate + UDP-N-acetyl-alpha-D-glucosamine = UDP-N-acetyl-3-O-(1-carboxyvinyl)-alpha-D-glucosamine + phosphate. It functions in the pathway cell wall biogenesis; peptidoglycan biosynthesis. Functionally, cell wall formation. Adds enolpyruvyl to UDP-N-acetylglucosamine. The protein is UDP-N-acetylglucosamine 1-carboxyvinyltransferase of Janthinobacterium sp. (strain Marseille) (Minibacterium massiliensis).